Here is a 657-residue protein sequence, read N- to C-terminus: Endoplasmic reticulum mannosyl-oligosaccharide 1,2-alpha-mannosidase (657 aa).

Residues 1 to 49 (MYPPPPAPAPHRDFISVTLSLGESYDNSKSRRRRSCWRKWKQLSRLQRN) lie on the Cytoplasmic side of the membrane. A helical transmembrane segment spans residues 50–70 (VILFVLGFLILCGFLYSLQVS). At 71 to 657 (DQWKALSGSR…AHPLPIWSPA (587 aa)) the chain is on the lumenal side. Residue serine 101 is modified to Phosphoserine. Residues 118–157 (HLRRGPPHLQIRPPNTVSKDGMQDDAKEREAALGKAQQEE) are disordered. Basic and acidic residues predominate over residues 138–157 (GMQDDAKEREAALGKAQQEE). Residue glutamate 288 is the Proton donor of the active site. Aspartate 421 is a catalytic residue. Cysteines 485 and 514 form a disulfide. Glutamate 528 functions as the Proton donor in the catalytic mechanism. Glutamate 557 is an active-site residue. Residue threonine 646 coordinates Ca(2+).

The protein belongs to the glycosyl hydrolase 47 family. Ca(2+) serves as cofactor.

The protein resides in the endoplasmic reticulum membrane. The catalysed reaction is N(4)-(alpha-D-Man-(1-&gt;2)-alpha-D-Man-(1-&gt;2)-alpha-D-Man-(1-&gt;3)-[alpha-D-Man-(1-&gt;2)-alpha-D-Man-(1-&gt;3)-[alpha-D-Man-(1-&gt;2)-alpha-D-Man-(1-&gt;6)]-alpha-D-Man-(1-&gt;6)]-beta-D-Man-(1-&gt;4)-beta-D-GlcNAc-(1-&gt;4)-beta-D-GlcNAc)-L-asparaginyl-[protein] (N-glucan mannose isomer 9A1,2,3B1,2,3) + 4 H2O = N(4)-(alpha-D-Man-(1-&gt;3)-[alpha-D-Man-(1-&gt;3)-[alpha-D-Man-(1-&gt;6)]-alpha-D-Man-(1-&gt;6)]-beta-D-Man-(1-&gt;4)-beta-D-GlcNAc-(1-&gt;4)-beta-D-GlcNAc)-L-asparaginyl-[protein] (N-glucan mannose isomer 5A1,2) + 4 beta-D-mannose. It catalyses the reaction N(4)-(alpha-D-Man-(1-&gt;2)-alpha-D-Man-(1-&gt;2)-alpha-D-Man-(1-&gt;3)-[alpha-D-Man-(1-&gt;3)-[alpha-D-Man-(1-&gt;2)-alpha-D-Man-(1-&gt;6)]-alpha-D-Man-(1-&gt;6)]-beta-D-Man-(1-&gt;4)-beta-D-GlcNAc-(1-&gt;4)-beta-D-GlcNAc)-L-asparaginyl-[protein] (N-glucan mannose isomer 8A1,2,3B1,3) + 3 H2O = N(4)-(alpha-D-Man-(1-&gt;3)-[alpha-D-Man-(1-&gt;3)-[alpha-D-Man-(1-&gt;6)]-alpha-D-Man-(1-&gt;6)]-beta-D-Man-(1-&gt;4)-beta-D-GlcNAc-(1-&gt;4)-beta-D-GlcNAc)-L-asparaginyl-[protein] (N-glucan mannose isomer 5A1,2) + 3 beta-D-mannose. It participates in protein modification; protein glycosylation. Involved in glycoprotein quality control targeting of misfolded glycoproteins for degradation. It primarily trims a single alpha-1,2-linked mannose residue from Man(9)GlcNAc(2) to produce Man(8)GlcNAc(2), but at high enzyme concentrations, as found in the ER quality control compartment (ERQC), it further trims the carbohydrates to Man(5-6)GlcNAc(2). In Rattus norvegicus (Rat), this protein is Endoplasmic reticulum mannosyl-oligosaccharide 1,2-alpha-mannosidase (Man1b1).